A 138-amino-acid chain; its full sequence is MNIIDSFEQKNIAKLTANKNIPDFEAGDTVKVTVKIIDRSIEKDGKEKLTERFQAYEGVVIAKRNRGITSSFLVRKISHGEGVERRFMTYSPIVHSIDVVKYGVVRRAKLYYLRNRSGKSARIKERHIPIAKNQAVKA.

It belongs to the bacterial ribosomal protein bL19 family.

Its function is as follows. This protein is located at the 30S-50S ribosomal subunit interface and may play a role in the structure and function of the aminoacyl-tRNA binding site. The sequence is that of Large ribosomal subunit protein bL19 from Rickettsia canadensis (strain McKiel).